The chain runs to 173 residues: Ribosome maturation factor RimM (173 aa).

The region spanning 94–166 (VQEEPYIDII…KIIVELPMGF (73 aa)) is the PRC barrel domain.

It belongs to the RimM family. Binds ribosomal protein uS19.

It is found in the cytoplasm. In terms of biological role, an accessory protein needed during the final step in the assembly of 30S ribosomal subunit, possibly for assembly of the head region. Essential for efficient processing of 16S rRNA. May be needed both before and after RbfA during the maturation of 16S rRNA. It has affinity for free ribosomal 30S subunits but not for 70S ribosomes. The polypeptide is Ribosome maturation factor RimM (Amoebophilus asiaticus (strain 5a2)).